The chain runs to 245 residues: Histone deacetylase HDT1 (245 aa).

Met-1 is subject to N-acetylmethionine. Required to repress transcription stretches follow at residues 2 to 5 (EFWG) and 101 to 162 (GYSE…EEEE). The interval 99–245 (PQGYSEEEEE…HNKAKHAAAK (147 aa)) is disordered. Residues 103–113 (SEEEEEEEEEV) are compositionally biased toward acidic residues. Residues 114 to 124 (PAGNAAKAVAK) show a composition bias toward low complexity. Positions 137–162 (DDEEDESDSDGMDEDDSDGEDSEEEE) are enriched in acidic residues. The span at 178-195 (TTPKAPVSAKKAKVAVTP) shows a compositional bias: low complexity. Polar residues predominate over residues 208-234 (ANQSPKSASQVSCGSCKKTFNSGNALE). Ser-211 is subject to Phosphoserine. A C2H2-type zinc finger spans residues 218–241 (VSCGSCKKTFNSGNALESHNKAKH).

This sequence belongs to the histone deacetylase HD2 family. Interacts with DNMT2. Interacts with DEK3. As to expression, expressed in leaves, roots, stems, young plantlets, flowers and siliques. Highest levels in ovules, embryos, shoot apical meristems and first leaves. Also expressed in somatic embryos.

It localises to the nucleus. Its subcellular location is the nucleolus. Its function is as follows. Probably mediates the deacetylation of lysine residues on the N-terminal part of the core histones (H2A, H2B, H3 and H4). Histone deacetylation gives a tag for epigenetic repression and plays an important role in transcriptional regulation, cell cycle progression and developmental events. Required for histone H3 'Lys-9' deacetylation. Involved in rRNA gene silencing in nucleolar dominance. Seems to be implicated in the regulation of genes involved in seeds development. The chain is Histone deacetylase HDT1 from Arabidopsis thaliana (Mouse-ear cress).